Consider the following 498-residue polypeptide: Pentatricopeptide repeat-containing protein At2g15980 (498 aa).

PPR repeat units lie at residues 244–274, 280–314, 315–349, 350–384, 385–423, 424–458, and 459–489; these read NATT…MEEE, NVYS…GVVY, DIVA…GIEC, TCLT…GFEA, DGLT…MFYP, SRNC…GFKP, and SQET…MAES.

Belongs to the PPR family. P subfamily.

The chain is Pentatricopeptide repeat-containing protein At2g15980 from Arabidopsis thaliana (Mouse-ear cress).